The primary structure comprises 226 residues: PtdIns3K complex I subunit atg38 (226 aa).

Ser2 is modified (N-acetylserine). 2 coiled-coil regions span residues 52–85 and 182–209; these read DVTQAIDLLKQDITAKIQELELLIEKQSSEENNI and FKEYGMKIDEITKENKKLANEIGRLRER.

This sequence belongs to the ATG38 family. As to quaternary structure, homodimer. Component of the autophagy-specific VPS34 PI3-kinase complex I composed of VPS15, VPS30, VPS34, ATG14 and an ATG38 homodimer. Interacts directly with ATG14 and VPS34.

The protein resides in the cytoplasm. It is found in the preautophagosomal structure membrane. Its function is as follows. Autophagy-related protein required for cytoplasm to vacuole transport (Cvt) and autophagy as a part of the autophagy-specific VPS34 PI3-kinase complex I. This complex is essential to recruit the ATG8-phosphatidylinositol conjugate and the ATG12-ATG5 conjugate to the pre-autophagosomal structure. ATG38 is required for the integrity of the active PI3-kinase complex I by maintaining an association between VPS15-VPS34 and ATG14-VPS30 subcomplexes. The sequence is that of PtdIns3K complex I subunit atg38 from Saccharomyces cerevisiae (strain ATCC 204508 / S288c) (Baker's yeast).